The sequence spans 314 residues: Olfactory receptor 14A2 (314 aa).

Topologically, residues 1-26 (MANVTLVTGFLLMGFSNIQKLRILYG) are extracellular. The N-linked (GlcNAc...) asparagine glycan is linked to asparagine 3. The chain crosses the membrane as a helical span at residues 27-47 (VLFLLIYLAALMSNLLIITLI). Residues 48–55 (TLDVKLQT) are Cytoplasmic-facing. The chain crosses the membrane as a helical span at residues 56 to 76 (PMYFFLKNLSFLDVFLVSVPI). The Extracellular portion of the chain corresponds to 77 to 91 (PKFIVNNLTHNNSIS). An N-linked (GlcNAc...) asparagine glycan is attached at asparagine 83. A helical membrane pass occupies residues 92–112 (ILGCAFQLLLMTSFSAGEIFI). Cysteine 95 and cysteine 177 are oxidised to a cystine. Residues 113–136 (LTAMSYDRYVAICCPLNYEVIMNT) lie on the Cytoplasmic side of the membrane. A helical membrane pass occupies residues 137 to 157 (GVCVLMASVSWAIGGLFGTAY). Over 158–193 (TAGTFSMPFCGSSVIPQFFCDVPSLLRISCSETLMV) the chain is Extracellular. The helical transmembrane segment at 194 to 214 (IYAGIGVGACLSISCFICIVI) threads the bilayer. Residues 215–237 (SYIYIFSTVLKIPTTKGQSKAFS) lie on the Cytoplasmic side of the membrane. A helical membrane pass occupies residues 238-258 (TCFPHLTVFTVFIITAYFVYL). Over 259 to 267 (KPPSNSPSV) the chain is Extracellular. The helical transmembrane segment at 268 to 290 (IDRLLSVIYTVMPPVFNPVTYSL) threads the bilayer. Residues 291–314 (RNNDMKCALIRLLQKTYGQEAYFI) lie on the Cytoplasmic side of the membrane.

The protein belongs to the G-protein coupled receptor 1 family.

The protein resides in the cell membrane. Functionally, odorant receptor. This is Olfactory receptor 14A2 (OR14A2) from Homo sapiens (Human).